The chain runs to 586 residues: Actin-related protein 9 (586 aa).

Residues 141-169 (STPIVDKDADVDPLQRSTPDDTEPNSEEN) are disordered.

Belongs to the actin family. ARP8 subfamily.

The sequence is that of Actin-related protein 9 (ARP9) from Oryza sativa subsp. japonica (Rice).